A 347-amino-acid chain; its full sequence is Selenide, water dikinase (347 aa).

The active site involves Cys-17. Residues Lys-20 and 48 to 50 contribute to the ATP site; that span reads TRD. A Mg(2+)-binding site is contributed by Asp-51. ATP-binding positions include Asp-68, Asp-91, and 139–141; that span reads GHS. Asp-91 contacts Mg(2+). Position 227 (Asp-227) interacts with Mg(2+).

The protein belongs to the selenophosphate synthase 1 family. Class I subfamily. Homodimer. It depends on Mg(2+) as a cofactor.

It catalyses the reaction hydrogenselenide + ATP + H2O = selenophosphate + AMP + phosphate + 2 H(+). Functionally, synthesizes selenophosphate from selenide and ATP. This is Selenide, water dikinase from Salmonella typhimurium (strain LT2 / SGSC1412 / ATCC 700720).